Here is a 524-residue protein sequence, read N- to C-terminus: Probable serine/threonine-protein kinase WNK10 (524 aa).

The region spanning 16–273 (IRYNDVLGRG…ALELLKDQLL (258 aa)) is the Protein kinase domain. ATP-binding positions include 96–99 (TELF) and Lys146. Catalysis depends on Asp163, which acts as the Proton acceptor. Ser477 is subject to Phosphoserine. Positions 480 to 523 (SNKQSEDLKTELNVIESQYNQSCQRLLRMKEEAIEKAKRKWMKL) form a coiled coil.

Belongs to the protein kinase superfamily. Ser/Thr protein kinase family. WNK subfamily.

It catalyses the reaction L-seryl-[protein] + ATP = O-phospho-L-seryl-[protein] + ADP + H(+). The catalysed reaction is L-threonyl-[protein] + ATP = O-phospho-L-threonyl-[protein] + ADP + H(+). In terms of biological role, may regulate flowering time by modulating the photoperiod pathway. The sequence is that of Probable serine/threonine-protein kinase WNK10 (WNK10) from Arabidopsis thaliana (Mouse-ear cress).